The following is a 179-amino-acid chain: MEQYRGTTILSVRRGNKVVIGGDGQVSLGNTIMKGNACKVRRLYKNQVIAGFAGGTADAFTLFERFEAKLEAHDGQLVRAAVELAKDWRTDRALRRLEALLAVANKDASLIVTGNGDVIQPENDLIAIGSGGAFAQSAARALLENTELEARDIVEKSLGIAGDVCVYTNHHFTIEELSF.

T7 is an active-site residue. The Na(+) site is built by G162, C165, and T168.

Belongs to the peptidase T1B family. HslV subfamily. A double ring-shaped homohexamer of HslV is capped on each side by a ring-shaped HslU homohexamer. The assembly of the HslU/HslV complex is dependent on binding of ATP.

It is found in the cytoplasm. It carries out the reaction ATP-dependent cleavage of peptide bonds with broad specificity.. With respect to regulation, allosterically activated by HslU binding. Functionally, protease subunit of a proteasome-like degradation complex believed to be a general protein degrading machinery. The protein is ATP-dependent protease subunit HslV of Saccharophagus degradans (strain 2-40 / ATCC 43961 / DSM 17024).